The chain runs to 199 residues: Ribosome maturation factor RimP (199 aa).

Residues Ala165 to Gln199 are disordered. Acidic residues predominate over residues Pro172–Gln199.

Belongs to the RimP family.

The protein localises to the cytoplasm. Required for maturation of 30S ribosomal subunits. The protein is Ribosome maturation factor RimP of Hyphomonas neptunium (strain ATCC 15444).